Consider the following 203-residue polypeptide: Large ribosomal subunit protein eL15 (203 aa).

The segment at 160 to 186 (ESRGLTSTGKRSRGLNKGHRYNKTRAG) is disordered. The segment covering 169 to 186 (KRSRGLNKGHRYNKTRAG) has biased composition (basic residues).

It belongs to the eukaryotic ribosomal protein eL15 family. Component of the large ribosomal subunit (LSU). Mature N.crassa ribosomes consist of a small (40S) and a large (60S) subunit. The 40S small subunit contains 1 molecule of ribosomal RNA (18S rRNA) and at least 32 different proteins. The large 60S subunit contains 3 rRNA molecules (26S, 5.8S and 5S rRNA) and at least 42 different proteins.

It is found in the cytoplasm. In terms of biological role, component of the ribosome, a large ribonucleoprotein complex responsible for the synthesis of proteins in the cell. The small ribosomal subunit (SSU) binds messenger RNAs (mRNAs) and translates the encoded message by selecting cognate aminoacyl-transfer RNA (tRNA) molecules. The large subunit (LSU) contains the ribosomal catalytic site termed the peptidyl transferase center (PTC), which catalyzes the formation of peptide bonds, thereby polymerizing the amino acids delivered by tRNAs into a polypeptide chain. The nascent polypeptides leave the ribosome through a tunnel in the LSU and interact with protein factors that function in enzymatic processing, targeting, and the membrane insertion of nascent chains at the exit of the ribosomal tunnel. This Neurospora crassa (strain ATCC 24698 / 74-OR23-1A / CBS 708.71 / DSM 1257 / FGSC 987) protein is Large ribosomal subunit protein eL15 (rpl-15).